A 195-amino-acid chain; its full sequence is Neurensin-1 (195 aa).

The next 2 helical transmembrane spans lie at 66-86 (LISGTVFVILGLTVLAVGFLV) and 120-140 (AVLFCIGGTSMAGCLLMSVFV).

It belongs to the VMP family. In terms of tissue distribution, expressed in brain. Not detectable in other tissues tested.

The protein localises to the membrane. Its subcellular location is the cell projection. It localises to the neuron projection. Functionally, may play an important role in neural organelle transport, and in transduction of nerve signals or in nerve growth. May play a role in neurite extension. May play a role in memory consolidation. The sequence is that of Neurensin-1 from Homo sapiens (Human).